Here is a 139-residue protein sequence, read N- to C-terminus: MAMTYHLDVVSAEQQMFSGLVQKIQVTGSEGELGIYPGHAPLLTAIKPGMVRIVKQHGEEEYIYLSGGILEVQPNTVTVLSDTAIRGQDLDEARALEAKRKAEDHIRNSHGDVDYAQASAELSKAIAKLRVIELTRKAM.

It belongs to the ATPase epsilon chain family. As to quaternary structure, F-type ATPases have 2 components, CF(1) - the catalytic core - and CF(0) - the membrane proton channel. CF(1) has five subunits: alpha(3), beta(3), gamma(1), delta(1), epsilon(1). CF(0) has three main subunits: a, b and c.

It is found in the cell inner membrane. Produces ATP from ADP in the presence of a proton gradient across the membrane. This is ATP synthase epsilon chain from Pectobacterium carotovorum subsp. carotovorum (strain PC1).